The chain runs to 926 residues: MGGSASSQLDEGKCAYIRGKTEASIKNFSPYYSRQYSVAFCNHVRSEVEQQRDLTSQFLKTKPPLEPGTVLYEAELSQFAEDIRKWKDRYIVIKNDFAVESYESKEAYQRGAVPKSRILPAGGKVLTSEEEYSLLSDKHFPDPTASSEKNSQPFVLLPKAFPVYLWQPYLRHGYFCFHEAAEQQKFSALLNDCIRHLNHDYMKQTTFEAQAFLEAVQFFRQEKGHYGSWEMTTGDEVQVLSKLVMEELLPTLQTDLLPKLKGKKNDRKRAWFGLLEEAYNLVQHQVSEGLNALKEECRALTKDLEGTIRSDMDQIVTSKNFLTGKIRAMVAQPAEQCCGESVQPFLASILEELMGPVSSGFSEVRALFEKEVDELSQSFHATQDSAQLKEGLQQLMKLPLDSVKMEPCYTKVTLLPERLLDLQSRFRFPHVDLVVQRTQNYMQELMENAVFTFEQLLSPYLQGEASRIPVAIEKVKLRVLKQYDYDSSTIRKKIFQEALIQITLPTVQKALASTCKPELQKYEQFIFADHTNMIHVENVYEEILYEILLDETLKVITEAAILKKHNLFEDNMALPSESVSSLTDLKTAMGSNQASPARRVSAILPGAPDNELPSNEVFQEPEEKKEQPGVPGSLAISASSCPSGGDGQVSVDHSAGGPLTVENTAGPLSSHLSEVEAGGTLKDEEPTCQSPEPSAVPGSLKELKKLLTVTVSVESAPVVENDIHNGTPVPQENIKEEESKIHPEASHPAAIQQDSCEEREVREKEAQPLEAEAPGVDLGILPEGRGSTSQSTSGGLTENTSCPGPIEEPFEAQEPAEKVLPAIVSTEDSPQAGGEAEHSVTVTPQEDATLSSNPICPMESNEVAQASGDQEVLGGEDSSALGMDTEQVNDTHEHACQWLVEDTLSTDILAVHDFDVSSPEQPSEEW.

G2 carries N-myristoyl glycine lipidation. A phosphoserine mark is found at S578, S581, S595, S601, and S640. Disordered regions lie at residues L604–S699 and V719–N889. Positions V661–L672 are enriched in polar residues. At S699 the chain carries Phosphoserine. Residues N733–A745 are compositionally biased toward basic and acidic residues. S755 is subject to Phosphoserine. Residues C756–Q767 show a composition bias toward basic and acidic residues. Positions G784–T797 are enriched in low complexity. Positions V840–P854 are enriched in polar residues. Position 923 is a phosphoserine (S923).

The protein belongs to the Niban family.

The protein localises to the cytoplasm. It localises to the membrane. Functionally, regulates phosphorylation of a number of proteins involved in translation regulation including EIF2A, EIF4EBP1 and RPS6KB1. May be involved in the endoplasmic reticulum stress response. The protein is Protein Niban 1 of Mus musculus (Mouse).